A 302-amino-acid polypeptide reads, in one-letter code: L-glutamate/L-aspartate-binding protein (302 aa).

The N-terminal stretch at 1-23 is a signal peptide; it reads MRIAPSLLSTAIVAALLSAPVVA.

This sequence belongs to the bacterial solute-binding protein 3 family.

The protein resides in the periplasm. Functionally, binds L-glutamate and L-aspartate. The polypeptide is L-glutamate/L-aspartate-binding protein (Pseudomonas aeruginosa (strain ATCC 15692 / DSM 22644 / CIP 104116 / JCM 14847 / LMG 12228 / 1C / PRS 101 / PAO1)).